A 456-amino-acid polypeptide reads, in one-letter code: NADPH-ferredoxin reductase FprA (456 aa).

Ser-14, Glu-40, Leu-48, and Val-84 together coordinate FAD. Residues Arg-110, 155–158, 199–200, and Glu-211 contribute to the NADP(+) site; these read NGNV and RR. Residues Trp-359 and 366 to 368 each bind FAD; that span reads GVI. Residue Gly-366 participates in NADP(+) binding.

Belongs to the ferredoxin--NADP reductase type 1 family. As to quaternary structure, monomer. It depends on FAD as a cofactor.

The enzyme catalyses 2 reduced [2Fe-2S]-[ferredoxin] + NADP(+) + H(+) = 2 oxidized [2Fe-2S]-[ferredoxin] + NADPH. In terms of biological role, may serve as electron transfer protein and supply electrons to P450 systems. The protein is NADPH-ferredoxin reductase FprA (fprA) of Mycobacterium tuberculosis (strain CDC 1551 / Oshkosh).